The chain runs to 387 residues: Eukaryotic translation initiation factor 3 subunit M (387 aa).

The PCI domain occupies Leu181–His340.

It belongs to the eIF-3 subunit M family. In terms of assembly, component of the eukaryotic translation initiation factor 3 (eIF-3) complex. The eIF-3 complex interacts with pix.

The protein resides in the cytoplasm. The protein localises to the golgi apparatus. Functionally, component of the eukaryotic translation initiation factor 3 (eIF-3) complex, which is involved in protein synthesis of a specialized repertoire of mRNAs and, together with other initiation factors, stimulates binding of mRNA and methionyl-tRNAi to the 40S ribosome. The eIF-3 complex specifically targets and initiates translation of a subset of mRNAs involved in cell proliferation. The protein is Eukaryotic translation initiation factor 3 subunit M of Drosophila sechellia (Fruit fly).